The following is a 139-amino-acid chain: Immunogenic miracidial antigen 8I (139 aa).

Residues Ile61–His139 are disordered. A compositionally biased stretch (acidic residues) spans Gly64–Asp85. Positions Ser90–Gln103 are enriched in polar residues.

This sequence belongs to the immunogenic miracidial antigen family.

The polypeptide is Immunogenic miracidial antigen 8I (8I) (Schistosoma japonicum (Blood fluke)).